We begin with the raw amino-acid sequence, 216 residues long: Probable GTP-binding protein EngB (216 aa).

Positions 37–214 (DGLEVAFAGR…RAAMIRLLDE (178 aa)) constitute an EngB-type G domain. GTP is bound by residues 45–52 (GRSNVGKS), 72–76 (GRTQE), 92–95 (DMPG), 159–162 (TKAD), and 193–195 (TSS). 2 residues coordinate Mg(2+): S52 and T74.

This sequence belongs to the TRAFAC class TrmE-Era-EngA-EngB-Septin-like GTPase superfamily. EngB GTPase family. Requires Mg(2+) as cofactor.

Functionally, necessary for normal cell division and for the maintenance of normal septation. The polypeptide is Probable GTP-binding protein EngB (Rhodopseudomonas palustris (strain HaA2)).